A 72-amino-acid polypeptide reads, in one-letter code: SRY-related protein ADW2 (72 aa).

A DNA-binding region (HMG box) is located at residues 1–69 (VKRPMNAFMV…KHMADYADYK (69 aa)).

It is found in the nucleus. This Alligator mississippiensis (American alligator) protein is SRY-related protein ADW2.